A 402-amino-acid polypeptide reads, in one-letter code: Protein PMR5 (402 aa).

Residues Leu7 to Gln23 form a helical; Signal-anchor for type II membrane protein membrane-spanning segment. The disordered stretch occupies residues Gly40 to Gln60. A compositionally biased stretch (low complexity) spans Ser41–Ser56. The GDS motif signature appears at Gly140–Ser142. The short motif at Asp379–Asn393 is the DCXHWCLPGXXDXWN motif element.

It belongs to the PC-esterase family. TBL subfamily. Expressed in flowers, siliques, stems and leaves.

It is found in the membrane. In terms of biological role, required for nonhost resistance (NHR) during plant-microbe interactions. Plants mutated in PMR5 are resistant to powdery mildew species. May act as a bridging protein that binds pectin and other cell wall polysaccharides. Probably involved in maintaining esterification of pectins. May be involved in the specific O-acetylation of cell wall polymers. In Arabidopsis thaliana (Mouse-ear cress), this protein is Protein PMR5 (PMR5).